The sequence spans 109 residues: EPIDERMAL PATTERNING FACTOR-like protein 4 (109 aa).

The signal sequence occupies residues 1–26 (MGTFRRRRRFLLAALVTFALLHLFSA). 3 cysteine pairs are disulfide-bonded: Cys66-Cys100, Cys70-Cys76, and Cys73-Cys102.

It belongs to the plant cysteine rich small secretory peptide family. Epidermal patterning factor subfamily. In terms of assembly, interacts with ERECTA. As to expression, expressed at the base of the apical meristem at 3 days after germination. Not detected in the hypocotyl. Expressed in developing stems soon after bolting, in inflorescence stems and in young siliques.

It localises to the secreted. Functionally, acts primarily as positive regulator of inflorescence growth. Endodermal expression is sufficient for proper inflorescence architecture. Redundantly involved with EPFL6 in procambial development regulation. Controls stomatal patterning. Mediates stomatal development inhibition. TMM (AC Q9SSD1) functions to dampen or block CLL2 signaling. Acts as a growth-regulatory ligand for ERECTA family receptors. This is EPIDERMAL PATTERNING FACTOR-like protein 4 from Arabidopsis thaliana (Mouse-ear cress).